The primary structure comprises 446 residues: Phosphoglucosamine mutase (446 aa).

Serine 99 acts as the Phosphoserine intermediate in catalysis. Positions 99, 242, 244, and 246 each coordinate Mg(2+). Serine 99 carries the post-translational modification Phosphoserine.

It belongs to the phosphohexose mutase family. Requires Mg(2+) as cofactor. Post-translationally, activated by phosphorylation.

The enzyme catalyses alpha-D-glucosamine 1-phosphate = D-glucosamine 6-phosphate. Catalyzes the conversion of glucosamine-6-phosphate to glucosamine-1-phosphate. The polypeptide is Phosphoglucosamine mutase (Campylobacter concisus (strain 13826)).